The primary structure comprises 216 residues: MAAGPRTSALLAFALLCLPWTREVGAFPAMPLSSLFANAVLRAQHLHQLAADTYKEFERAYIPEGQRYSIQNAQAAFCFSETIPAPTGKDEAQQRSDVELLRFSLLLIQSWLGPVQFLSRVFTNSLVFGTSDRVYEKLKDLEEGIQALMRELEDGSPRAGQILKQTYDKFDTNLRSDDALLKNYGLLSCFKKDLHKAETYLRVMKCRRFVESSCAF.

An N-terminal signal peptide occupies residues 1-26 (MAAGPRTSALLAFALLCLPWTREVGA). Residue histidine 45 participates in Zn(2+) binding. Cysteine 78 and cysteine 189 form a disulfide bridge. A Phosphoserine modification is found at serine 131. Glutamate 198 is a binding site for Zn(2+). A disulfide bond links cysteine 206 and cysteine 214.

This sequence belongs to the somatotropin/prolactin family.

Its subcellular location is the secreted. In terms of biological role, plays an important role in growth control. Its major role in stimulating body growth is to stimulate the liver and other tissues to secrete IGF1. It stimulates both the differentiation and proliferation of myoblasts. It also stimulates amino acid uptake and protein synthesis in muscle and other tissues. In Sus scrofa (Pig), this protein is Somatotropin (GH1).